Consider the following 513-residue polypeptide: MTNLVNEMILVLDFGSQYNQLITRRIREFGVYSELHPHTLTAEEIKEMAPKGIILSGGPNSVYDEGSFRCDEKIFDLDIPVLGICYGMQLMTHYLGGKVEAASQREYGKADIHINGTPALFKDLPTDQVVWMSHGDLVVEVPEGFTVDATSAHCPNSAMSLAEKNFYGVQFHPEVRHSEYGNDLLKNFVFGVCDCDGKWSMENFIEIEMQKIRETVGDKQVLCALSGGVDSSVVAVLIHKAIGDQLTCIFVDHGLLRKGEAEGVMKTFSEGFNMNVIKVDAKDRFLNKLKGVSDPEQKRKIIGNEFIYVFDDESDKLKGIDYLAQGTLYTDIIESGTATAQTIKSHHNVGGLPEDMQFELIEPLNTLFKDEVRALGSELGIPDDIVWRQPFPGPGLGIRVLGEISEEKLEIVRESDAILREEIANFGLERDIWQYFTVLPDIRSVGVMGDARTYDYTIGIRAVTSIDGMTSDWARIPWDVLEKISTRIVNEVKHVNRVVYDITSKPPATIEWE.

In terms of domain architecture, Glutamine amidotransferase type-1 spans 8 to 198 (MILVLDFGSQ…VFGVCDCDGK (191 aa)). Cysteine 85 acts as the Nucleophile in catalysis. Residues histidine 172 and glutamate 174 contribute to the active site. A GMPS ATP-PPase domain is found at 199-388 (WSMENFIEIE…LGIPDDIVWR (190 aa)). ATP is bound at residue 226 to 232 (SGGVDSS).

In terms of assembly, homodimer.

The catalysed reaction is XMP + L-glutamine + ATP + H2O = GMP + L-glutamate + AMP + diphosphate + 2 H(+). It participates in purine metabolism; GMP biosynthesis; GMP from XMP (L-Gln route): step 1/1. In terms of biological role, catalyzes the synthesis of GMP from XMP. The chain is GMP synthase [glutamine-hydrolyzing] from Bacillus pumilus (strain SAFR-032).